Here is a 475-residue protein sequence, read N- to C-terminus: Probable 5'-adenylylsulfate reductase 1, chloroplastic (475 aa).

The transit peptide at 1–63 directs the protein to the chloroplast; the sequence is MASATASISS…AAEPARQPVS (63 aa). The interval 72–327 is reductase domain; it reads AAPVAEDAAA…KAKECGLHKG (256 aa). The Thioredoxin domain occupies 341 to 475; sequence HKAGGANGNG…SLLAFVNSLR (135 aa). Residues Cys-393 and Cys-396 each act as nucleophile in the active site. The cysteines at positions 393 and 396 are disulfide-linked.

This sequence belongs to the APS reductase family. [4Fe-4S] cluster is required as a cofactor.

It is found in the plastid. The protein localises to the chloroplast. The enzyme catalyses glutathione disulfide + sulfite + AMP + 2 H(+) = adenosine 5'-phosphosulfate + 2 glutathione. Its function is as follows. Reduces sulfate for Cys biosynthesis. This chain is Probable 5'-adenylylsulfate reductase 1, chloroplastic (APR1), found in Oryza sativa subsp. japonica (Rice).